Here is a 267-residue protein sequence, read N- to C-terminus: Undecaprenyl-diphosphatase (267 aa).

The next 7 membrane-spanning stretches (helical) occupy residues 1-21, 49-69, 83-103, 111-131, 190-210, 219-239, and 245-265; these read MTLF…FLPV, VGTL…AVAG, AFLA…GLAL, ALRS…VLYW, MLMS…EVAA, DAAI…TLMM, and VSFT…LIIA.

It belongs to the UppP family.

The protein localises to the cell inner membrane. It carries out the reaction di-trans,octa-cis-undecaprenyl diphosphate + H2O = di-trans,octa-cis-undecaprenyl phosphate + phosphate + H(+). In terms of biological role, catalyzes the dephosphorylation of undecaprenyl diphosphate (UPP). Confers resistance to bacitracin. This chain is Undecaprenyl-diphosphatase, found in Dinoroseobacter shibae (strain DSM 16493 / NCIMB 14021 / DFL 12).